The sequence spans 110 residues: CHH-like protein (110 aa).

Positions 1-23 (MHLSSVQFAWAALVALAVSAAGA) are cleaved as a signal peptide. A propeptide spanning residues 24–35 (LPSSAPHHVERR) is cleaved from the precursor. 3 disulfide bridges follow: C42–C78, C58–C74, and C61–C87. The residue at position 107 (V107) is a Valine amide.

The protein belongs to the arthropod CHH/MIH/GIH/VIH hormone family.

Its subcellular location is the secreted. The chain is CHH-like protein (CHHL) from Bombyx mori (Silk moth).